The primary structure comprises 337 residues: 4-hydroxythreonine-4-phosphate dehydrogenase (337 aa).

Residues H137 and T138 each coordinate substrate. A divalent metal cation-binding residues include H167, H212, and H267. Positions 275, 284, and 293 each coordinate substrate.

Belongs to the PdxA family. In terms of assembly, homodimer. Zn(2+) is required as a cofactor. Requires Mg(2+) as cofactor. The cofactor is Co(2+).

The protein resides in the cytoplasm. It carries out the reaction 4-(phosphooxy)-L-threonine + NAD(+) = 3-amino-2-oxopropyl phosphate + CO2 + NADH. Its pathway is cofactor biosynthesis; pyridoxine 5'-phosphate biosynthesis; pyridoxine 5'-phosphate from D-erythrose 4-phosphate: step 4/5. Catalyzes the NAD(P)-dependent oxidation of 4-(phosphooxy)-L-threonine (HTP) into 2-amino-3-oxo-4-(phosphooxy)butyric acid which spontaneously decarboxylates to form 3-amino-2-oxopropyl phosphate (AHAP). The protein is 4-hydroxythreonine-4-phosphate dehydrogenase of Ectopseudomonas mendocina (strain ymp) (Pseudomonas mendocina).